The following is a 214-amino-acid chain: MSQITIALTKGRIEEDTVKLLTQAGFDMSFMADKGRSLIFESPDGRFRFLLVKGPDVTTYVRHGVADLGIVGKDILFEHPTGYLELLDLNFGLCKFSLASVPSYDPHDHKRKRIATKYPTVATNYFNQKGEDVEIISIQGSVEISPVLGLADAIVDIVETGHTLSANGLLVFEDICRVSVRLIANQASLKNNPDIMPFVAKIESLVGRREVAFK.

This sequence belongs to the ATP phosphoribosyltransferase family. Short subfamily. As to quaternary structure, heteromultimer composed of HisG and HisZ subunits.

Its subcellular location is the cytoplasm. The enzyme catalyses 1-(5-phospho-beta-D-ribosyl)-ATP + diphosphate = 5-phospho-alpha-D-ribose 1-diphosphate + ATP. Its pathway is amino-acid biosynthesis; L-histidine biosynthesis; L-histidine from 5-phospho-alpha-D-ribose 1-diphosphate: step 1/9. In terms of biological role, catalyzes the condensation of ATP and 5-phosphoribose 1-diphosphate to form N'-(5'-phosphoribosyl)-ATP (PR-ATP). Has a crucial role in the pathway because the rate of histidine biosynthesis seems to be controlled primarily by regulation of HisG enzymatic activity. This chain is ATP phosphoribosyltransferase, found in Streptococcus gordonii (strain Challis / ATCC 35105 / BCRC 15272 / CH1 / DL1 / V288).